We begin with the raw amino-acid sequence, 435 residues long: GPI-anchor transamidase component PIGU (435 aa).

The Cytoplasmic segment spans residues 1–3 (MAA). A helical transmembrane segment spans residues 4-22 (PLALVLVVAVTVRAALFRS). Over 23-78 (SLAEFISERVEVVSPLSSWKRVVEGLSLLDLGVSPYSGAVFHETPLIIYLFHFLID) the chain is Lumenal. The chain crosses the membrane as a helical span at residues 79–99 (YAELVFMITDALTAIALYFAI). The Cytoplasmic portion of the chain corresponds to 100–136 (QDFNKVVFKKQKLLLELDQYAPDVAELIRTPMEMRYI). Helical transmembrane passes span 137–158 (PLKVALFYLLNPYTILSCVAKS), 159–178 (TCAINNTLIAFFILTTIKGS), 179–194 (VFLSAIFLALATYQTL), and 195–205 (YPVTLFAPGLL). Over 206–222 (YLLQRQYIPVKVKSKAF) the chain is Cytoplasmic. Lysine 216 serves as a coordination point for a cardiolipin. A helical transmembrane segment spans residues 223–244 (WIFSWEYAMMYIGSLVVIVCLS). Topologically, residues 245 to 286 (FFLLSSWDFIPAVYGFILSVPDLTPNIGLFWYFFAEMFEHFS) are lumenal. Residues 287-306 (LFFVCVFQINVFFYTVPLAI) traverse the membrane as a helical segment. Residues 307–311 (KLKEH) are Cytoplasmic-facing. Lysine 309 contacts a cardiolipin. The next 2 membrane-spanning stretches (helical) occupy residues 312–331 (PIFFMFIQIAIISIFKSYPT) and 332–345 (VGDVALYMAFFPVW). Residues 346–354 (NHLYRFLRN) are Cytoplasmic-facing. The chain crosses the membrane as a helical span at residues 355–372 (VFVLTCIIVVCSLLFPVL). Residues 373–384 (WHLWIYAGSANS) are Lumenal-facing. Positions 383 and 385 each coordinate a 2-acyl-6-[6-phosphoethanolamine-alpha-D-mannosyl-(1-&gt;2)-6-phosphoethanolamine-alpha-D-mannosyl-(1-&gt;6)-2-phosphoethanolamine-alpha-D-mannosyl-(1-&gt;4)-alpha-D-glucosaminyl]-1-(1-radyl,2-acyl-sn-glycero-3-phospho)-1D-myo-inositol. Residues 385 to 406 (NFFYAITLTFNVGQILLISDYF) form a helical membrane-spanning segment. Residues 407–435 (YAFLRREYYLTHGLYLTAKDGTEAMLVLK) are Cytoplasmic-facing.

The protein belongs to the PIGU family. In terms of assembly, heteropentamer. Part of the GPI-anchor transamidase complex, consisting of PIGK, PIGT, PIGS, PIGU and GAA1.

Its subcellular location is the endoplasmic reticulum membrane. It participates in glycolipid biosynthesis; glycosylphosphatidylinositol-anchor biosynthesis. Component of the glycosylphosphatidylinositol-anchor (GPI-anchor) transamidase (GPI-T) complex that catalyzes the formation of the linkage between a proprotein and a GPI-anchor and participates in GPI anchored protein biosynthesis. Binds the lipid portion of GPI-anchor. May act as an organizer in the transmembrane layer to recruit other subunits, and thus is essential for assembly of the complex. This is GPI-anchor transamidase component PIGU from Cricetulus griseus (Chinese hamster).